The following is a 178-amino-acid chain: Large ribosomal subunit protein eL20y (178 aa).

It belongs to the eukaryotic ribosomal protein eL20 family.

The sequence is that of Large ribosomal subunit protein eL20y (RPL18AB) from Arabidopsis thaliana (Mouse-ear cress).